The primary structure comprises 37 residues: Large ribosomal subunit protein bL36 (37 aa).

Belongs to the bacterial ribosomal protein bL36 family.

The chain is Large ribosomal subunit protein bL36 from Prochlorococcus marinus (strain MIT 9303).